We begin with the raw amino-acid sequence, 263 residues long: Dermonecrotic toxin SpaSicTox-betaIF1 (263 aa).

Glutamate 15 and aspartate 17 together coordinate Mg(2+). Residue histidine 31 is the Nucleophile of the active site. 2 cysteine pairs are disulfide-bonded: cysteine 35–cysteine 41 and cysteine 37–cysteine 179. Aspartate 75 serves as a coordination point for Mg(2+).

The protein belongs to the arthropod phospholipase D family. Class II subfamily. The cofactor is Mg(2+). Expressed by the venom gland.

Its subcellular location is the secreted. The enzyme catalyses an N-(acyl)-sphingosylphosphocholine = an N-(acyl)-sphingosyl-1,3-cyclic phosphate + choline. It catalyses the reaction an N-(acyl)-sphingosylphosphoethanolamine = an N-(acyl)-sphingosyl-1,3-cyclic phosphate + ethanolamine. The catalysed reaction is a 1-acyl-sn-glycero-3-phosphocholine = a 1-acyl-sn-glycero-2,3-cyclic phosphate + choline. It carries out the reaction a 1-acyl-sn-glycero-3-phosphoethanolamine = a 1-acyl-sn-glycero-2,3-cyclic phosphate + ethanolamine. Functionally, dermonecrotic toxins cleave the phosphodiester linkage between the phosphate and headgroup of certain phospholipids (sphingolipid and lysolipid substrates), forming an alcohol (often choline) and a cyclic phosphate. This toxin acts on sphingomyelin (SM). It may also act on ceramide phosphoethanolamine (CPE), lysophosphatidylcholine (LPC) and lysophosphatidylethanolamine (LPE), but not on lysophosphatidylserine (LPS), and lysophosphatidylglycerol (LPG). It acts by transphosphatidylation, releasing exclusively cyclic phosphate products as second products. Induces dermonecrosis, hemolysis, increased vascular permeability, edema, inflammatory response, and platelet aggregation. This chain is Dermonecrotic toxin SpaSicTox-betaIF1, found in Sicarius patagonicus (Six-eyed sand spider).